The primary structure comprises 296 residues: Diguanylate cyclase DgcZ (296 aa).

Zn(2+) contacts are provided by H22, C52, H79, and H83. Residues 157 to 289 (LNLYLMLLDI…GRNRCMFIDE (133 aa)) enclose the GGDEF domain. The Mg(2+) site is built by D165 and I166. Residues N173, H178, D182, and 195 to 200 (WTRDYE) each bind substrate. E208 provides a ligand contact to Mg(2+). The active-site Proton acceptor is the E208. Residues K215, R224, and R228 each coordinate substrate.

As to quaternary structure, homodimer. The cofactor is Mg(2+).

It catalyses the reaction 2 GTP = 3',3'-c-di-GMP + 2 diphosphate. It participates in purine metabolism; 3',5'-cyclic di-GMP biosynthesis. Its activity is regulated as follows. Allosterically regulated by zinc, which seems to regulate the activity of the catalytic GGDEF domains by impeding their mobility and thus preventing productive encounter of the two GTP substrates. Subject to product inhibition by c-di-GMP at a KI of 44 uM. Functionally, catalyzes the synthesis of cyclic-di-GMP (c-di-GMP) via the condensation of 2 GTP molecules. May act as a zinc sensor that controls, via c-di-GMP, post-translational events. Overexpression leads to a strong repression of swimming; swimming returnes to normal when residues 206-207 are both mutated to Ala. Overexpression also leads to a reduction in flagellar abundance and a 20-fold increase in c-di-GMP levels in vivo. Required for aminoglycoside-mediated induction of biofilm formation, it also plays a lesser role in biofilm production in response to other classes of translation inhibitors. The c-di-GMP produced by this enzyme up-regulates poly-GlcNAc production as well as the biofilm synthesis protein PgaD, although c-di-GMP is probably not the main inducing principle. C-di-GMP is a second messenger which controls cell surface-associated traits in bacteria. This is Diguanylate cyclase DgcZ from Escherichia coli (strain K12).